The following is a 150-amino-acid chain: MAALDPTLLILLVLAGLGIISHNMTVTLAILTLIAVRITPLNQFFPWIEKYGLTIGILILTIGVMTPIASGKISASEVLHSFVQWKSILAIVVGVAVSWLGGRGVSLMTHQPSVVAGLLVGTVLGVALFRGVPVGPLIAAGLLSLVIGKS.

4 helical membrane passes run Met-1–Ser-21, Tyr-51–Gly-71, Ile-88–Met-108, and Val-114–Val-134.

Belongs to the UPF0756 family.

Its subcellular location is the cell membrane. The polypeptide is UPF0756 membrane protein YE1142 (Yersinia enterocolitica serotype O:8 / biotype 1B (strain NCTC 13174 / 8081)).